The following is a 152-amino-acid chain: FMN reductase (NADH) RutF (152 aa).

It belongs to the non-flavoprotein flavin reductase family. RutF subfamily.

The catalysed reaction is FMNH2 + NAD(+) = FMN + NADH + 2 H(+). In terms of biological role, catalyzes the reduction of FMN to FMNH2 which is used to reduce pyrimidine by RutA via the Rut pathway. The polypeptide is FMN reductase (NADH) RutF (Shigella dysenteriae serotype 1 (strain Sd197)).